The primary structure comprises 581 residues: MTDFDLMNFPFHERLDSPVSENGEIKDGEPIPQNWLNENHVGKSILPLFVNPEDVINCNFSNARDSYEENKSPSMDQMNYARNTSYQESPGLQERPKNEKDKSPIGTDVHKKDVPNFIHSTPRENSSKHFTRANEQASAQPTDEHTSPDISIEDCNGAKIFLQNSLSKEDFRMLENVILGYQKKVIELGRDNLRQEERANSLQKELEAATKSNDKTLDNKKKIEEQTVLIENLTKDLSLNKEMLEKANDTIQTKHTALLSLTDSLRKAELFEIPIGILFFDLYDSEENSSKLDHILQEKYPNIKGFLCASQQEELSRISQRFKNAKAEAEDLRNELENKKIEIQTMREKNNTLIGTNKTLSKQNKILCDKFDKLTIDEKEILKGCNEEIKIKLERLNERLGSWEKSKEKYETSLKDKEKMLADAEKKTNTLSKELDNLRSRFGNLEGNTSERITIKNILQSRPDISAEECNFLMVEQIDSANLTTLQNTVKEIVLAVGIPYPKLRRKIPLLAIKLKYENIMLSNFAQRLHRQVYSQEMNLKKFTDQAYYDFMSTRRMDSIDHHLERCLDHLYDHILEKMVK.

A phosphoserine mark is found at serine 17, serine 20, serine 72, serine 85, and serine 89. The segment at 86–150 (YQESPGLQER…PTDEHTSPDI (65 aa)) is disordered. A compositionally biased stretch (basic and acidic residues) spans 94–114 (ERPKNEKDKSPIGTDVHKKDV). The residue at position 151 (serine 151) is a Phosphoserine. 3 coiled-coil regions span residues 179–252 (LGYQ…DTIQ), 306–363 (FLCA…LSKQ), and 373–451 (KLTI…NTSE).

In terms of assembly, interacts directly with ADY3 and YOR129C. Interacts with ADY4. Probable component of a SPB complex composed of ADY3, SSP1, DON1, MPC54, SPO21/MPC70, NUD1 and CNM67. Post-translationally, phosphorylated in its N-terminal part.

The protein localises to the cytoplasm. It is found in the cytoskeleton. Its subcellular location is the microtubule organizing center. The protein resides in the spindle pole body. Functionally, involved in the pathway that organizes the shaping and sizing of the prospore membrane (PSM) during sporulation. Required for the proper formation of the spindle pole body (SPB) outer plaque. May connect the outer plaque to the central plaque embedded in the nuclear envelope. The chain is Chaotic nuclear migration protein 67 (CNM67) from Saccharomyces cerevisiae (strain ATCC 204508 / S288c) (Baker's yeast).